Consider the following 1607-residue polypeptide: Laminin subunit gamma-1 (1607 aa).

The signal sequence occupies residues 1–33 (MTGGGRAALALQPRGRLWPLLAVLAAVAGCVRA). Residues 44–283 (RPQRCMPEFV…AISDFAVGGR (240 aa)) enclose the Laminin N-terminal domain. N-linked (GlcNAc...) asparagine glycosylation is found at N58 and N132. 15 disulfide bridges follow: C284/C293, C286/C303, C305/C314, C340/C349, C342/C365, C368/C377, C380/C393, C396/C408, C398/C414, C416/C425, C428/C440, C443/C454, C445/C461, C463/C472, and C475/C490. Laminin EGF-like domains lie at 284 to 339 (CKCN…ESLP), 340 to 395 (CDCN…ACSP), 396 to 442 (CHCS…GCRP), and 443 to 492 (CSCD…GCTP). Residues 493–502 (CFCFGHSSVC) enclose the Laminin EGF-like 5; first part domain. The Laminin IV type A domain maps to 512–687 (DISSTFQIDE…PGVPATWVES (176 aa)). N574 and N648 each carry an N-linked (GlcNAc...) asparagine glycan. One can recognise a Laminin EGF-like 5; second part domain in the interval 688 to 721 (CTCPVGYGGQFCETCLPGYRRETPSLGPYSPCVL). 24 disulfide bridges follow: C722–C731, C724–C738, C740–C749, C752–C768, C771–C779, C773–C790, C793–C802, C805–C823, C826–C840, C828–C847, C850–C859, C862–C879, C882–C896, C884–C903, C905–C914, C917–C930, C933–C945, C935–C952, C954–C963, C966–C978, C981–C993, C983–C999, C1001–C1010, and C1013–C1026. Laminin EGF-like domains lie at 722-770 (CTCN…DCQP) and 771-825 (CPCP…LCRP). Residues 826-881 (CQCNDNIDPNAVGNCNRLTGECLKCIYNTAGFYCDRCKEGFFGNPLAPNPADKCKA) form the Laminin EGF-like 8; nidogen-binding domain. 3 Laminin EGF-like domains span residues 882–932 (CACN…GCER), 933–980 (CDCH…GCKP), and 981–1028 (CDCH…GCQE). N-linked (GlcNAc...) asparagine glycosylation is found at N1020 and N1105. The tract at residues 1029-1607 (CPACYRLVKD…CFNTPSIEKP (579 aa)) is domain II and I. Positions 1034 to 1594 (RLVKDKAAEH…HNLEDIKKTL (561 aa)) form a coiled coil. Residue S1147 is modified to Phosphoserine. N1159, N1173, N1203, N1221, N1239, N1378, N1393, and N1437 each carry an N-linked (GlcNAc...) asparagine glycan. S1491 is subject to Phosphoserine.

As to quaternary structure, laminin is a complex glycoprotein, consisting of three different polypeptide chains (alpha, beta, gamma), which are bound to each other by disulfide bonds into a cross-shaped molecule comprising one long and three short arms with globules at each end. Gamma-1 is a subunit of laminin-1 (laminin-111 or EHS laminin), laminin-2 (laminin-211 or merosin), laminin-3 (laminin-121 or S-laminin), laminin-4 (laminin-221 or S-merosin), laminin-6 (laminin-311 or K-laminin), laminin-7 (laminin-321 or KS-laminin), laminin-8 (laminin-411), laminin-9 (laminin-421), laminin-10 (laminin-511) and laminin-11 (laminin-521). Interacts with SVEP1. As to expression, found in the basement membranes (major component).

It is found in the secreted. The protein localises to the extracellular space. The protein resides in the extracellular matrix. Its subcellular location is the basement membrane. In terms of biological role, binding to cells via a high affinity receptor, laminin is thought to mediate the attachment, migration and organization of cells into tissues during embryonic development by interacting with other extracellular matrix components. The sequence is that of Laminin subunit gamma-1 (Lamc1) from Mus musculus (Mouse).